A 570-amino-acid chain; its full sequence is Endo-1,4-beta-xylanase 4 (570 aa).

An N-terminal signal peptide occupies residues 1–24 (MKRFNYGFFHLVLFLISLLLLGSG). N92, N190, and N300 each carry an N-linked (GlcNAc...) asparagine glycan. The region spanning 195 to 494 (EGSVISIEQI…TQAGDLIDKL (300 aa)) is the GH10 domain. E325 acts as the Proton donor in catalysis. N339 carries N-linked (GlcNAc...) asparagine glycosylation. Residue E432 is the Nucleophile of the active site. Residue N545 is glycosylated (N-linked (GlcNAc...) asparagine).

Belongs to the glycosyl hydrolase 10 (cellulase F) family.

The catalysed reaction is Endohydrolysis of (1-&gt;4)-beta-D-xylosidic linkages in xylans.. It participates in glycan degradation; xylan degradation. In terms of biological role, binds to and hydrolyzes insoluble and soluble xylan substrates. The sequence is that of Endo-1,4-beta-xylanase 4 from Arabidopsis thaliana (Mouse-ear cress).